Reading from the N-terminus, the 400-residue chain is S-adenosylmethionine synthase (400 aa).

H15 lines the ATP pocket. A Mg(2+)-binding site is contributed by D17. E43 provides a ligand contact to K(+). Residues E56 and Q99 each coordinate L-methionine. The tract at residues 99-109 is flexible loop; it reads QSLEIGAGVDT. ATP-binding positions include 174 to 176, D254, 260 to 261, A277, and K281; these read DGK and RK. D254 is an L-methionine binding site. K285 is a binding site for L-methionine.

This sequence belongs to the AdoMet synthase family. In terms of assembly, homotetramer; dimer of dimers. Mg(2+) serves as cofactor. K(+) is required as a cofactor.

It localises to the cytoplasm. The enzyme catalyses L-methionine + ATP + H2O = S-adenosyl-L-methionine + phosphate + diphosphate. It participates in amino-acid biosynthesis; S-adenosyl-L-methionine biosynthesis; S-adenosyl-L-methionine from L-methionine: step 1/1. In terms of biological role, catalyzes the formation of S-adenosylmethionine (AdoMet) from methionine and ATP. The overall synthetic reaction is composed of two sequential steps, AdoMet formation and the subsequent tripolyphosphate hydrolysis which occurs prior to release of AdoMet from the enzyme. In Corynebacterium kroppenstedtii (strain DSM 44385 / JCM 11950 / CIP 105744 / CCUG 35717), this protein is S-adenosylmethionine synthase.